We begin with the raw amino-acid sequence, 137 residues long: Large ribosomal subunit protein uL16 (137 aa).

Belongs to the universal ribosomal protein uL16 family. In terms of assembly, part of the 50S ribosomal subunit.

Binds 23S rRNA and is also seen to make contacts with the A and possibly P site tRNAs. This chain is Large ribosomal subunit protein uL16, found in Rhizobium meliloti (strain 1021) (Ensifer meliloti).